Consider the following 473-residue polypeptide: UDP-glycosyltransferase 91D2 (473 aa).

His26 serves as the catalytic Proton acceptor. His26 lines the an anthocyanidin pocket. Residue Asp121 is the Charge relay of the active site. Ala344, Gln346, His361, Ser366, and Glu369 together coordinate UDP-alpha-D-glucose. Position 384 (Gly384) interacts with an anthocyanidin. Asp385 and Gln386 together coordinate UDP-alpha-D-glucose.

Belongs to the UDP-glycosyltransferase family.

It catalyses the reaction steviolmonoside + UDP-alpha-D-glucose = steviolbioside + UDP + H(+). It carries out the reaction rubusoside + UDP-alpha-D-glucose = stevioside + UDP + H(+). The catalysed reaction is stevioside + UDP-alpha-D-glucose = rebaudioside E + UDP + H(+). The enzyme catalyses rebaudioside A + UDP-alpha-D-glucose = rebaudioside D + UDP + H(+). In terms of biological role, involved in the biosynthesis of steviol glycosides in leaves. Converts the mono-glycoside steviolmonoside to the bi-glycoside steviolbioside. Converts the bi-glycoside rubusoside to the tri-glycoside stevioside. Converts the tri-glycoside stevioside to the tetra-glycoside rebaudioside E. Converts the tetra-glycoside rebaudioside A to the penta-glycoside rebaudioside E. The chain is UDP-glycosyltransferase 91D2 from Stevia rebaudiana (Stevia).